The following is a 528-amino-acid chain: Tyrosine 3-monooxygenase (528 aa).

Serine 19 is modified (phosphoserine; by CaMK2). The segment at 33 to 65 (GQGAPGPSLTGSPWPGTAAPAASYTPTPRSPRF) is disordered. The span at 47 to 59 (PGTAAPAASYTPT) shows a compositional bias: low complexity. Serine 62 is modified (phosphoserine). Phosphoserine; by CaMK2 and PKA is present on serine 71. Positions 361, 366, and 406 each coordinate Fe cation. The residue at position 502 (serine 502) is a Phosphoserine.

The protein belongs to the biopterin-dependent aromatic amino acid hydroxylase family. Homotetramer. Interacts (when phosphorylated at Ser-19) with YWHAG; one YWHAG dimer binds to one TH tetramer and this interaction may influence the phosphorylation and dephosphorylation of other sites. Interacts with NT5DC2; the interaction results in reduced phosphorylation and decreased catalytic activity of TH. Fe(2+) serves as cofactor. Phosphorylated on Ser-19, Ser-62 and Ser-71 by several protein kinases with different site specificities. Phosphorylation at Ser-62 and Ser-71 leads to an increase of TH activity. Phosphorylation at Ser-71 activates the enzyme and also counteracts the feedback inhibition of TH by catecholamines. Phosphorylation of Ser-19 and Ser-62 triggers the proteasomal degradation of TH through the ubiquitin-proteasome pathway. Phosphorylation at Ser-62 facilitates transport of TH from the soma to the nerve terminals via the microtubule network. Phosphorylation at Ser-19 induces the high-affinity binding to the 14-3-3 protein YWHAG; this interaction may influence the phosphorylation and dephosphorylation of other sites. Ser-19 increases the phosphorylation at Ser-71 in a hierarchical manner, leading to increased activity. As to expression, mainly expressed in the brain and adrenal glands.

The protein resides in the cytoplasm. The protein localises to the perinuclear region. It is found in the nucleus. It localises to the cell projection. Its subcellular location is the axon. The protein resides in the cytoplasmic vesicle. The protein localises to the secretory vesicle. It is found in the synaptic vesicle. The enzyme catalyses (6R)-L-erythro-5,6,7,8-tetrahydrobiopterin + L-tyrosine + O2 = (4aS,6R)-4a-hydroxy-L-erythro-5,6,7,8-tetrahydrobiopterin + L-dopa. It participates in catecholamine biosynthesis; dopamine biosynthesis; dopamine from L-tyrosine: step 1/2. With respect to regulation, inhibited in feedback fashion by the catecholamine neurotransmitters, especially by dopamine in competition with tetrahydrobiopterin. Phosphorylation of several Ser/Thr residues in the N-terminus regulates the catalytic activity. Ser-62 and Ser-71 are readily phosphorylated to activate the catalytic activity. A Cysteine modification induced by N-ethylmaleimide (NEM), inhibits tyrosine 3-monooxygenase activity through the modification of the Cys-207. In terms of biological role, catalyzes the conversion of L-tyrosine to L-dihydroxyphenylalanine (L-Dopa), the rate-limiting step in the biosynthesis of catecholamines, dopamine, noradrenaline, and adrenaline. Uses tetrahydrobiopterin and molecular oxygen to convert tyrosine to L-Dopa. In addition to tyrosine, is able to catalyze the hydroxylation of phenylalanine and tryptophan with lower specificity. Positively regulates the regression of retinal hyaloid vessels during postnatal development. Its function is as follows. Lacks catalytic activity. The sequence is that of Tyrosine 3-monooxygenase from Homo sapiens (Human).